A 328-amino-acid polypeptide reads, in one-letter code: dTDP-glucose 4,6-dehydratase (328 aa).

Residues 13–14, 37–40, 63–64, 82–86, and Thr-101 contribute to the NAD(+) site; these read FI, DALT, DI, and LAAES. Ser-86 is a substrate binding site. Thr-126 is a binding site for substrate. Asp-127 functions as the Proton donor in the catalytic mechanism. Catalysis depends on proton acceptor residues Glu-128 and Tyr-150. 150-154 is a binding site for NAD(+); the sequence is YSASK. Position 179 (Asn-179) interacts with substrate. Asn-180 is a binding site for NAD(+). Residues 189–190, 205–207, Arg-214, Asn-249, and 272–276 each bind substrate; these read KL, PLY, and DRKGH.

The protein belongs to the NAD(P)-dependent epimerase/dehydratase family. dTDP-glucose dehydratase subfamily. Homodimer. It depends on NAD(+) as a cofactor.

The catalysed reaction is dTDP-alpha-D-glucose = dTDP-4-dehydro-6-deoxy-alpha-D-glucose + H2O. It participates in antibiotic biosynthesis; streptomycin biosynthesis. Involved in the biosynthesis of the streptose moiety of streptomycin. Catalyzes the dehydration of dTDP-D-glucose to form dTDP-6-deoxy-D-xylo-4-hexulose via a three-step process involving oxidation, dehydration and reduction. The sequence is that of dTDP-glucose 4,6-dehydratase from Streptomyces griseus.